Consider the following 469-residue polypeptide: MQQADTLAAQFDVAVIGSGPGGYEAAIHAARYGLKTCIVEKAVLGGVCVNWGCIPTKALLRSAEVFDLAKNPETFGVNVGNVSFDLAQAVKRSRNVALKSSKGVAYLLKKAAVEVLAGEAVLTGGAGVMVTMPDGSVRMLGAKNIIVATGSTPRVIPGLEPDGKKIITSREALILKEVPKSMIVVGGGAIGVEMAWFYAKAGSKVTIVELMPRMLPAEEAEVSEALKRSFEKAGITVHCGAKLDNVAVSESGVSAELVVEGSAPQTLNASCLLVAVGVTGAIDGLGLDAVGVETERGFIRTDGQCRTSAPGIYAIGDVRGGMLLAHKASAEAAIAVEAIAGKSPEPLSEPLIPRCVYAQPSVASVGLTEEAAVNAGYQVAVGRSQFAASGKANAYGQLEGFVKLVFDAATGKMLGGHLIGHDAVELIGELGLACRYGVTAGGLVNTVHAHPTLSETVREAAFDALQSMG.

FAD is bound by residues 40–48 (EKAVLGGVC), lysine 57, and alanine 120. Cysteines 48 and 53 form a disulfide. NAD(+) contacts are provided by residues 186–190 (GGGAI), glutamate 209, and 275–278 (AVGV). FAD contacts are provided by aspartate 317 and alanine 325. The active-site Proton acceptor is histidine 450.

It belongs to the class-I pyridine nucleotide-disulfide oxidoreductase family. In terms of assembly, homodimer. The cofactor is FAD.

It localises to the cytoplasm. It catalyses the reaction N(6)-[(R)-dihydrolipoyl]-L-lysyl-[protein] + NAD(+) = N(6)-[(R)-lipoyl]-L-lysyl-[protein] + NADH + H(+). Its function is as follows. Lipoamide dehydrogenase is a component of the alpha-ketoacid dehydrogenase complexes. This is Dihydrolipoyl dehydrogenase (lpd) from Chlorobaculum tepidum (strain ATCC 49652 / DSM 12025 / NBRC 103806 / TLS) (Chlorobium tepidum).